The following is a 577-amino-acid chain: Heavy metal-associated isoprenylated plant protein 34 (577 aa).

In terms of domain architecture, HMA spans 9-72; sequence LQTCVLKVNV…KLSKSGKHAE (64 aa). Residues Cys-20 and Cys-23 each contribute to the a metal cation site. A compositionally biased stretch (gly residues) spans 77–87; that stretch reads GGGGGGGGGKG. 2 disordered regions span residues 77–136 and 150–451; these read GGGG…QPMQ and AAHG…GPGG. Low complexity predominate over residues 97 to 106; that stretch reads NLNMGGNNKP. Positions 118 to 129 are enriched in gly residues; sequence KAGGGGGGGQNH. Residues 168–177 show a composition bias toward basic and acidic residues; it reads KDQKKSVKFA. Acidic residues predominate over residues 178–213; it reads DDEDDEFSEDDYDDEDFSEDDYDDDEFDDDEDDDDE. Low complexity predominate over residues 227–244; the sequence is HMPPNKMMMPNKMMPQMG. 2 stretches are compositionally biased toward gly residues: residues 245-254 and 266-281; these read GHHGNGGGPK and FKGGGGGGKKGGGGGF. Composition is skewed to basic and acidic residues over residues 294–326 and 344–358; these read KNGKDGKKGKGGEKGKKEGKENKGGGKTGKTDA and NGDEKKSAGKKDGHG. Composition is skewed to gly residues over residues 379–392 and 420–451; these read KKGGGGTKGGGHGG and GIGGGPMGPGGPMGPGGPMGQGGPMGMMGPGG. Position 574 is a cysteine methyl ester (Cys-574). A lipid anchor (S-farnesyl cysteine) is attached at Cys-574. Positions 575 to 577 are cleaved as a propeptide — removed in mature form; it reads SIM.

It belongs to the HIPP family.

In terms of biological role, heavy-metal-binding protein. The sequence is that of Heavy metal-associated isoprenylated plant protein 34 from Arabidopsis thaliana (Mouse-ear cress).